A 185-amino-acid chain; its full sequence is Pyridoxal 5'-phosphate synthase subunit PdxT (185 aa).

46-48 (GES) contacts L-glutamine. Cysteine 75 functions as the Nucleophile in the catalytic mechanism. L-glutamine is bound by residues arginine 101 and 129 to 130 (IR). Active-site charge relay system residues include histidine 165 and glutamate 167.

Belongs to the glutaminase PdxT/SNO family. In the presence of PdxS, forms a dodecamer of heterodimers. Only shows activity in the heterodimer.

The enzyme catalyses aldehydo-D-ribose 5-phosphate + D-glyceraldehyde 3-phosphate + L-glutamine = pyridoxal 5'-phosphate + L-glutamate + phosphate + 3 H2O + H(+). It carries out the reaction L-glutamine + H2O = L-glutamate + NH4(+). Its pathway is cofactor biosynthesis; pyridoxal 5'-phosphate biosynthesis. Its function is as follows. Catalyzes the hydrolysis of glutamine to glutamate and ammonia as part of the biosynthesis of pyridoxal 5'-phosphate. The resulting ammonia molecule is channeled to the active site of PdxS. This chain is Pyridoxal 5'-phosphate synthase subunit PdxT, found in Staphylococcus epidermidis (strain ATCC 12228 / FDA PCI 1200).